A 371-amino-acid polypeptide reads, in one-letter code: MRPFVTDARRVVVKVGSSSLTTAAGGLDVDRLEALVAAVLPRAGQQLVLVSSGAIAAGLAPLGLARRPRDLATQQAAASVGQSSLVHSYAAAFGRAGHQVGQVLLTATDVIRRTHYRNARTALDRLLELDVIPIINENDAVATQEIRVGDNDRLAAIVAHLVSADLLVLLSDVDGLYDANPRLGPATMVREVRSDTDLDGLTARGTGTAGVGVGGMATKIEAARMAASGGVTAIITSAANAAPVLRGEEVGTVFHPTGSRRASRLLWLAHATAPEGRLHLDSGAVAAVVRRRASLLPAGITGVEGDFAAGDPVDLVDPDGRSVARGLVAFDAAELPVMLGRSTADLAMELGPSYEREIVHRDDLVLLLPAR.

Lys14 is a binding site for ATP. Substrate contacts are provided by Ser52, Asp139, and Asn151. Residue 171 to 172 (SD) participates in ATP binding. Residues 275 to 353 (EGRLHLDSGA…ADLAMELGPS (79 aa)) enclose the PUA domain.

Belongs to the glutamate 5-kinase family.

The protein localises to the cytoplasm. It carries out the reaction L-glutamate + ATP = L-glutamyl 5-phosphate + ADP. The protein operates within amino-acid biosynthesis; L-proline biosynthesis; L-glutamate 5-semialdehyde from L-glutamate: step 1/2. In terms of biological role, catalyzes the transfer of a phosphate group to glutamate to form L-glutamate 5-phosphate. This is Glutamate 5-kinase from Frankia casuarinae (strain DSM 45818 / CECT 9043 / HFP020203 / CcI3).